We begin with the raw amino-acid sequence, 332 residues long: MSDFAFFALEALIKCIIIIAIFASLAGLATYAERKVLAYFQRRIGPDMVGPFGLIQLVADMIKLFTKEDIIPSNSQKFIFAIAPLISAICAFVSLAAIPMLPEFTLFGRVIQPIVADINVALLFVIGTSGLCFYAVFLGGLASNNKWSILGAARGLVAIISYESVGALALIAIVMLVGSFSLVDINNYQSDGFFSWLIFKQPLAFVLFIIALFIETNRTPLCLTENDAEIVAGYGTEYSGLRWGMFFIGEYASMIAGAILVTLLFLGGFNSFWIIPGWIMMIVKSSFIFFWYFWARAAFPQLRPDQVMKMCYLILIPLAVLNLLITALAVLL.

9 helical membrane-spanning segments follow: residues 4–24 (FAFFALEALIKCIIIIAIFAS), 44–64 (IGPDMVGPFGLIQLVADMIKL), 78–98 (FIFAIAPLISAICAFVSLAAI), 120–140 (VALLFVIGTSGLCFYAVFLGG), 165–185 (VGALALIAIVMLVGSFSLVDI), 194–214 (FSWLIFKQPLAFVLFIIALFI), 255–275 (IAGAILVTLLFLGGFNSFWII), 279–299 (IMMIVKSSFIFFWYFWARAAF), and 312–332 (YLILIPLAVLNLLITALAVLL).

Belongs to the complex I subunit 1 family. As to quaternary structure, NDH-1 is composed of 14 different subunits. Subunits NuoA, H, J, K, L, M, N constitute the membrane sector of the complex.

The protein resides in the cell inner membrane. The catalysed reaction is a quinone + NADH + 5 H(+)(in) = a quinol + NAD(+) + 4 H(+)(out). In terms of biological role, NDH-1 shuttles electrons from NADH, via FMN and iron-sulfur (Fe-S) centers, to quinones in the respiratory chain. The immediate electron acceptor for the enzyme in this species is believed to be ubiquinone. Couples the redox reaction to proton translocation (for every two electrons transferred, four hydrogen ions are translocated across the cytoplasmic membrane), and thus conserves the redox energy in a proton gradient. This subunit may bind ubiquinone. In Campylobacter jejuni subsp. jejuni serotype O:6 (strain 81116 / NCTC 11828), this protein is NADH-quinone oxidoreductase subunit H.